Reading from the N-terminus, the 441-residue chain is Deoxyguanosinetriphosphate triphosphohydrolase-like protein (441 aa).

The tract at residues 1-27 is disordered; sequence MTSSVWQERRHGEDKQRRNDHRSPYQR. A compositionally biased stretch (basic and acidic residues) spans 7-27; it reads QERRHGEDKQRRNDHRSPYQR. One can recognise an HD domain in the interval 59–252; it reads RLTHSLEVSQ…MELADDIAYA (194 aa).

This sequence belongs to the dGTPase family. Type 2 subfamily.

The polypeptide is Deoxyguanosinetriphosphate triphosphohydrolase-like protein (Shewanella oneidensis (strain ATCC 700550 / JCM 31522 / CIP 106686 / LMG 19005 / NCIMB 14063 / MR-1)).